We begin with the raw amino-acid sequence, 359 residues long: Phosphoribosylformylglycinamidine cyclo-ligase (359 aa).

Belongs to the AIR synthase family.

It is found in the cytoplasm. The enzyme catalyses 2-formamido-N(1)-(5-O-phospho-beta-D-ribosyl)acetamidine + ATP = 5-amino-1-(5-phospho-beta-D-ribosyl)imidazole + ADP + phosphate + H(+). It functions in the pathway purine metabolism; IMP biosynthesis via de novo pathway; 5-amino-1-(5-phospho-D-ribosyl)imidazole from N(2)-formyl-N(1)-(5-phospho-D-ribosyl)glycinamide: step 2/2. The chain is Phosphoribosylformylglycinamidine cyclo-ligase from Brucella canis (strain ATCC 23365 / NCTC 10854 / RM-666).